Reading from the N-terminus, the 112-residue chain is UPF0060 membrane protein Daro_2632 (112 aa).

4 consecutive transmembrane segments (helical) span residues 7–27 (VLGL…LPWL), 34–54 (PVWL…LLTL), 59–79 (AGRI…IWLW), and 89–109 (WDLV…LQPA).

This sequence belongs to the UPF0060 family.

The protein resides in the cell inner membrane. This Dechloromonas aromatica (strain RCB) protein is UPF0060 membrane protein Daro_2632.